Here is a 358-residue protein sequence, read N- to C-terminus: MIEELIRSEIRSFIPYNANQQPYKIKLDANESPFTLPPQMRKKLAEYILEDPQLNLYPDTDSVQLRQALGEYWSVDKENIIVGTGSDQLIQIIANVFLEKGDKVLYPTPSFGMYKDSCVIAGGRAVDYILDQNDNFSYSADKIIKTYELEQPKVIYICNPNNPTGNLMPQDEILRVLKACTKSVVVVDEAYAEFSDTTVIPFIKEYENLLILRTFSKAFGLAGIRCGYSIASEKLTRAVNLTRPPYNISSLSQFTAALILSYKEEIQNNIQYLVEERERVLSKLKEIDGLKVYSSAANFILIKVQNSKDIYRKLCEKGIFVRAFSSSPLLSDCMRITIGTQEQNSILLDELYAICYNK.

Lys217 bears the N6-(pyridoxal phosphate)lysine mark.

This sequence belongs to the class-II pyridoxal-phosphate-dependent aminotransferase family. Histidinol-phosphate aminotransferase subfamily. As to quaternary structure, homodimer. It depends on pyridoxal 5'-phosphate as a cofactor.

The catalysed reaction is L-histidinol phosphate + 2-oxoglutarate = 3-(imidazol-4-yl)-2-oxopropyl phosphate + L-glutamate. Its pathway is amino-acid biosynthesis; L-histidine biosynthesis; L-histidine from 5-phospho-alpha-D-ribose 1-diphosphate: step 7/9. The sequence is that of Histidinol-phosphate aminotransferase from Ruminiclostridium cellulolyticum (strain ATCC 35319 / DSM 5812 / JCM 6584 / H10) (Clostridium cellulolyticum).